A 645-amino-acid chain; its full sequence is MNQINIQFPDGNTKEFDKGTTTEDIAQSISPGLRKKAVAGKFNGQLVDLTRPLEQDGAIEIITPGSEEALEVLRHSTAHLMAQALKRLYGDVKFGVGPVIEGGFYYDFDMDDKVSSDDFDKIEKTMKQIVNENHKIVREVVSKEKAKDFFKDDPYKLELIDAIPEDESVTLYTQGEFTDLCRGVHVPSTSKIKEFKLLSTAGAYWRGNSDNKMLQRIYGTAFFDKKDLKAHLKMLEERRERDHRKIGKDLELFTNNQLVGAGLPLWLPNGATIRREIERYIVDKEVSMGYDHVYTPVLANVDLYKTSGHWDHYQEDMFPAMKLDEDEAMVLRPMNCPHHMMIYKNKPHSYRELPIRIAELGTMHRYEASGAVSGLQRVRGMTLNDSHIFVRPDQIKEEFKRVVNMIQDVYKDFGFEDYRFRLSYRDPEDKHKYFDDDEMWEKAESMLKEASDELGLTYEEAIGEAAFYGPKLDVQVKTAMGKEETLSTAQLDFLLPERFDLTYIGQDGEQHRPVVIHRGVVSTMERFVAFLTEETKGAFPTWLAPMQVEIIPVNIDLHYDYARLLQDELKSQGVRVEIDDRNEKMGYKIREAQMKKIPYQIVVGDQEVENQEVNVRKYGSEKQESVEKDEFIWNVIDEIRLKKHR.

Residues Met1–Thr63 form the TGS domain. The interval Asp242 to Pro540 is catalytic. The Zn(2+) site is built by Cys336, His387, and His517.

This sequence belongs to the class-II aminoacyl-tRNA synthetase family. In terms of assembly, homodimer. The cofactor is Zn(2+).

The protein localises to the cytoplasm. It carries out the reaction tRNA(Thr) + L-threonine + ATP = L-threonyl-tRNA(Thr) + AMP + diphosphate + H(+). Catalyzes the attachment of threonine to tRNA(Thr) in a two-step reaction: L-threonine is first activated by ATP to form Thr-AMP and then transferred to the acceptor end of tRNA(Thr). Also edits incorrectly charged L-seryl-tRNA(Thr). The polypeptide is Threonine--tRNA ligase (Staphylococcus epidermidis (strain ATCC 35984 / DSM 28319 / BCRC 17069 / CCUG 31568 / BM 3577 / RP62A)).